Reading from the N-terminus, the 104-residue chain is Gastrin (104 aa).

Positions 1 to 21 (MQRLCAYVLIHVLALAACSEA) are cleaved as a signal peptide. Positions 22 to 58 (SWKPGFQLQDASSGPGANRGKEPHELDRLGPASHHRR) are excised as a propeptide. Residues 27–67 (FQLQDASSGPGANRGKEPHELDRLGPASHHRRQLGLQGPPH) form a disordered region. The span at 40–49 (RGKEPHELDR) shows a compositional bias: basic and acidic residues. Pyrrolidone carboxylic acid; in form big gastrin is present on glutamine 59. Pyrrolidone carboxylic acid; in form gastrin is present on glutamine 76. A Sulfotyrosine; partial modification is found at tyrosine 87. Phenylalanine 92 is subject to Phenylalanine amide. Serine 96 carries the post-translational modification Phosphoserine. The propeptide occupies 96 to 104 (SAEEGDQRP).

Belongs to the gastrin/cholecystokinin family. Sulfation enhances proteolytic processing, and blocks peptide degradation. Levels of sulfation differ between proteolytically-cleaved gastrins. Thus, gastrin-6 is almost 73% sulfated, whereas the larger gastrins are less than 50% sulfated. Sulfation levels are also tissue-specific.

Its subcellular location is the secreted. Gastrin stimulates the stomach mucosa to produce and secrete hydrochloric acid and the pancreas to secrete its digestive enzymes. It also stimulates smooth muscle contraction and increases blood circulation and water secretion in the stomach and intestine. This chain is Gastrin (GAST), found in Sus scrofa (Pig).